Consider the following 202-residue polypeptide: Large ribosomal subunit protein bL25 (202 aa).

Belongs to the bacterial ribosomal protein bL25 family. CTC subfamily. In terms of assembly, part of the 50S ribosomal subunit; part of the 5S rRNA/L5/L18/L25 subcomplex. Contacts the 5S rRNA. Binds to the 5S rRNA independently of L5 and L18.

In terms of biological role, this is one of the proteins that binds to the 5S RNA in the ribosome where it forms part of the central protuberance. This Burkholderia ambifaria (strain MC40-6) protein is Large ribosomal subunit protein bL25.